The sequence spans 298 residues: L-xylulose reductase (298 aa).

The NADP(+) site is built by Ile19, Asp68, and Asn103. Active-site proton donor residues include Ser161, Ser162, and Tyr175. NADP(+) is bound by residues Tyr175, Lys179, and Val207. Lys179 (lowers pKa of active site Tyr) is an active-site residue.

The protein belongs to the short-chain dehydrogenases/reductases (SDR) family.

It carries out the reaction xylitol + NADP(+) = L-xylulose + NADPH + H(+). The protein operates within carbohydrate degradation; L-arabinose degradation via L-arabinitol; D-xylulose 5-phosphate from L-arabinose (fungal route): step 3/5. Its function is as follows. L-xylulose reductase involved in the catabolism of L-arabinose through an oxidoreductive pathway. Catalyzes the NADPH-dependent reduction of L-xylulose. This is L-xylulose reductase from Aspergillus niger (strain ATCC 1015 / CBS 113.46 / FGSC A1144 / LSHB Ac4 / NCTC 3858a / NRRL 328 / USDA 3528.7).